A 146-amino-acid polypeptide reads, in one-letter code: Large ribosomal subunit protein bL19 (146 aa).

This sequence belongs to the bacterial ribosomal protein bL19 family.

Its function is as follows. This protein is located at the 30S-50S ribosomal subunit interface and may play a role in the structure and function of the aminoacyl-tRNA binding site. The chain is Large ribosomal subunit protein bL19 from Bartonella bacilliformis (strain ATCC 35685 / KC583 / Herrer 020/F12,63).